A 189-amino-acid chain; its full sequence is Large ribosomal subunit protein bL9 (189 aa).

Belongs to the bacterial ribosomal protein bL9 family.

Functionally, binds to the 23S rRNA. This is Large ribosomal subunit protein bL9 from Brucella melitensis biotype 2 (strain ATCC 23457).